The sequence spans 148 residues: Nucleoside diphosphate kinase B (148 aa).

Lys-9, Phe-57, Arg-85, Thr-91, Arg-102, and Asn-112 together coordinate ATP. His-115 functions as the Pros-phosphohistidine intermediate in the catalytic mechanism.

The protein belongs to the NDK family. The cofactor is Mg(2+).

The enzyme catalyses a 2'-deoxyribonucleoside 5'-diphosphate + ATP = a 2'-deoxyribonucleoside 5'-triphosphate + ADP. It catalyses the reaction a ribonucleoside 5'-diphosphate + ATP = a ribonucleoside 5'-triphosphate + ADP. Its function is as follows. Major role in the synthesis of nucleoside triphosphates other than ATP. The ATP gamma phosphate is transferred to the NDP beta phosphate via a ping-pong mechanism, using a phosphorylated active-site intermediate. In Flaveria bidentis (Coastal plain yellowtops), this protein is Nucleoside diphosphate kinase B.